Here is a 562-residue protein sequence, read N- to C-terminus: Tetratricopeptide repeat protein 34 (562 aa).

A disordered region spans residues Met-1–Glu-30. Basic and acidic residues predominate over residues Lys-19–Glu-30. 8 TPR repeats span residues Asp-51 to Arg-84, Lys-175 to Asn-208, Glu-210 to Tyr-242, Ala-304 to Asp-337, Phe-388 to Asn-421, Lys-423 to His-455, Ala-461 to Ser-494, and Ala-509 to Asn-542.

This Xenopus laevis (African clawed frog) protein is Tetratricopeptide repeat protein 34 (ttc34).